The primary structure comprises 105 residues: Nitrogen fixation nifHD1 region GlnB-like protein 1 (105 aa).

It belongs to the P(II) protein family.

Functionally, could be involved in the regulation of nitrogen fixation. This chain is Nitrogen fixation nifHD1 region GlnB-like protein 1 (glnBA), found in Methanosarcina barkeri.